We begin with the raw amino-acid sequence, 318 residues long: Probable aminopeptidase YbaC (318 aa).

The active-site Nucleophile is the Ser-115. Asp-266 is an active-site residue. The active-site Proton donor is His-296.

Belongs to the peptidase S33 family.

Functionally, probable aminopeptidase. The sequence is that of Probable aminopeptidase YbaC (ybaC) from Bacillus subtilis (strain 168).